Here is a 61-residue protein sequence, read N- to C-terminus: Large ribosomal subunit protein bL28 (61 aa).

Belongs to the bacterial ribosomal protein bL28 family.

The protein is Large ribosomal subunit protein bL28 of Geobacillus kaustophilus (strain HTA426).